Consider the following 697-residue polypeptide: Serine/threonine-protein kinase tousled-like 2 (697 aa).

Disordered regions lie at residues 25 to 159 (VAKG…SQSE) and 288 to 316 (KLLIKKKPPSASQTPPPNLEPNKRKSKSN). Over residues 31-44 (HNESSNQSLCSVGS) the composition is skewed to polar residues. A compositionally biased stretch (basic and acidic residues) spans 46 to 61 (SDKELETPEKKSNDQR). Positions 109 to 145 (SSPQHSLSNPPAAVQQGSPSSISSVNTDHSHTSTSHK) are enriched in polar residues. Coiled-coil stretches lie at residues 265-294 (AFQNLVKQQERVNGQREEIERQRKLLIKKK) and 336-373 (KLRLGHLKKEEAEIQVELERLERVRNLHIRELKRIHNE). Positions 388-666 (YLLLHLLGRG…VHQLASDPYL (279 aa)) constitute a Protein kinase domain. Residues 394 to 402 (LGRGGFSEV) and K417 contribute to the ATP site. Residue D518 is the Proton acceptor of the active site.

Belongs to the protein kinase superfamily. Ser/Thr protein kinase family. Monomer. May form homodimers; homodimerization may enhance autophosphoylation and enzymatic activity. Heterodimer with TLK1. Requires Mg(2+) as cofactor. Phosphorylated. Autophosphorylated; phosphorylation promotes the assembly of higher order oligomers and enzymatic activity.

The protein resides in the nucleus. It is found in the nucleoplasm. The protein localises to the cytoplasm. Its subcellular location is the perinuclear region. It localises to the cytoskeleton. It catalyses the reaction L-seryl-[protein] + ATP = O-phospho-L-seryl-[protein] + ADP + H(+). It carries out the reaction L-threonyl-[protein] + ATP = O-phospho-L-threonyl-[protein] + ADP + H(+). In terms of biological role, serine/threonine-protein kinase involved in the process of chromatin assembly and probably also DNA replication, transcription, repair, and chromosome segregation. Negative regulator of amino acid starvation-induced autophagy. This chain is Serine/threonine-protein kinase tousled-like 2, found in Danio rerio (Zebrafish).